The following is a 2203-amino-acid chain: Voltage-dependent L-type calcium channel subunit alpha-1D (2203 aa).

2 disordered regions span residues 1–51 (MMMM…QTVL) and 64–100 (KAAQ…SSNS). The Cytoplasmic portion of the chain corresponds to 1–126 (MMMMMMMKKM…RACISIVDWK (126 aa)). The span at 38 to 51 (GPTSQPNSSKQTVL) shows a compositional bias: polar residues. Residues 82–93 (QRKRQQYAKSKK) are compositionally biased toward basic residues. One copy of the I repeat lies at 112–408 (NNPIRRACIS…NLVLGVLSGE (297 aa)). Residues 127–145 (PFDIFILLAIFANCVALAI) traverse the membrane as a helical segment. Topologically, residues 146–163 (YIPFPEDDSNSTNHNLEK) are extracellular. The N-linked (GlcNAc...) asparagine glycan is linked to N155. The chain crosses the membrane as a helical span at residues 164–183 (VEYAFLIIFTVETFLKIIAS). The Cytoplasmic segment spans residues 184–195 (GLLLHPNASVRN). The chain crosses the membrane as a helical span at residues 196-214 (GWNLLDFVIVIVGLFSVIL). The Extracellular segment spans residues 215–235 (EQLTKETEGGNHSSGKSGGFD). N-linked (GlcNAc...) asparagine glycosylation is present at N225. The helical transmembrane segment at 236–254 (VKALRAFRVLRPLRLVSGV) threads the bilayer. Topologically, residues 255-273 (PSLQVVLNSIIKAMVPLLH) are cytoplasmic. Residues 274–293 (IALLVLFVIIIYAIIGLELF) traverse the membrane as a helical segment. Over 294 to 381 (IGKMHKTCFF…WVNDAIGWEW (88 aa)) the chain is Extracellular. An N-linked (GlcNAc...) asparagine glycan is attached at N329. E364 lines the Ca(2+) pocket. A helical membrane pass occupies residues 382–406 (PWVYFVSLIILGSFFVLNLVLGVLS). Residues 407-582 (GEFSKEREKA…RRCRAAVKSV (176 aa)) lie on the Cytoplasmic side of the membrane. The binding to the beta subunit stretch occupies residues 429–446 (QQLEEDLKGYLDWITQAE). Residues 449 to 480 (DPENEEEGGEEGKRNTSMPTSETESVNTENVS) are disordered. Over residues 463 to 479 (NTSMPTSETESVNTENV) the composition is skewed to polar residues. An II repeat occupies 528–774 (EALCVCRCSL…DWNAVMYDGI (247 aa)). A helical transmembrane segment spans residues 583 to 602 (TFYWLVIVLVFLNTLTISSE). Residues 603 to 617 (HYNQPDWLTQIQDIA) lie on the Extracellular side of the membrane. The chain crosses the membrane as a helical span at residues 618–636 (NKVLLALFTCEMLVKMYSL). The Cytoplasmic segment spans residues 637-644 (GLQAYFVS). A helical transmembrane segment spans residues 645–663 (LFNRFDCFVVCGGITETIL). Over 664-673 (VELELMSPLG) the chain is Extracellular. Residues 674–692 (VSVFRCVRLLRIFKVTRHW) traverse the membrane as a helical segment. Residues 693 to 711 (TSLSNLVASLLNSMKSIAS) are Cytoplasmic-facing. The helical transmembrane segment at 712 to 732 (LLLLLFLFIIIFSLLGMQLFG) threads the bilayer. Over 733 to 786 (GKFNFDETQTKRSTFDNFPQALLTVFQILTGEDWNAVMYDGIMAYGGPSSSGMI) the chain is Extracellular. E764 contacts Ca(2+). Residues 787 to 811 (VCIYFIILFICGNYILLKLFLAIAV) traverse the membrane as a helical segment. Residues 812–945 (DNLADAESLN…VGCHKLINHH (134 aa)) lie on the Cytoplasmic side of the membrane. Residues 822–909 (TAQKEEAEEK…AGPRPRRISE (88 aa)) are disordered. The span at 824-849 (QKEEAEEKERKKIARKESLENKKNNK) shows a compositional bias: basic and acidic residues. Residues 850–861 (PEVNQIANSDNK) show a composition bias toward polar residues. Positions 884-897 (VGEEEEEEEEDEPE) are enriched in acidic residues. Residues 892–1174 (EEDEPEVPAG…LLYKAIDSNG (283 aa)) form an III repeat. Residues 946–964 (IFTNLILVFIMLSSAALAA) form a helical membrane-spanning segment. At 965 to 980 (EDPIRSHSFRNTILGY) the chain is on the extracellular side. The helical transmembrane segment at 981–1000 (FDYAFTAIFTVEILLKMTTF) threads the bilayer. Residues 1001–1012 (GAFLHKGAFCRN) are Cytoplasmic-facing. A helical transmembrane segment spans residues 1013 to 1031 (YFNLLDMLVVGVSLVSFGI). Over 1032–1037 (QSSAIS) the chain is Extracellular. The helical transmembrane segment at 1038 to 1057 (VVKILRVLRVLRPLRAINRA) threads the bilayer. Topologically, residues 1058 to 1076 (KGLKHVVQCVFVAIRTIGN) are cytoplasmic. Residues 1077-1096 (IMIVTTLLQFMFACIGVQLF) traverse the membrane as a helical segment. At 1097 to 1186 (KGKFYRCTDE…VGPVYNYRVE (90 aa)) the chain is on the extracellular side. Residues 1134 to 1224 (RIWQNSDFNF…QEQGEKEYKN (91 aa)) form a dihydropyridine binding region. E1160 is a Ca(2+) binding site. A helical membrane pass occupies residues 1187–1207 (ISIFFIIYIIIVAFFMMNIFV). Over 1208-1264 (GFVIVTFQEQGEKEYKNCELDKNQRQCVEYALKARPLRRYIPKNPYQYKFWYVVNSS) the chain is Cytoplasmic. One copy of the IV repeat lies at 1211 to 1486 (IVTFQEQGEK…YTCGSNFAIV (276 aa)). A helical membrane pass occupies residues 1265–1283 (PFEYMMFVLIMLNTLCLAM). Over 1284-1298 (QHYEQSKMFNDAMDI) the chain is Extracellular. A helical membrane pass occupies residues 1299–1318 (LNMVFTGVFTVEMVLKVIAF). Residues 1319 to 1325 (KPKGYFS) are Cytoplasmic-facing. Residues 1326–1347 (DAWNTFDSLIVIGSIIDVALSE) form a helical membrane-spanning segment. Topologically, residues 1348 to 1357 (ADNSEESNRI) are extracellular. A helical transmembrane segment spans residues 1358–1377 (SITFFRLFRVMRLVKLLSRG). Residues 1378–1396 (EGIRTLLWTFIKSFQALPY) are Cytoplasmic-facing. A helical transmembrane segment spans residues 1397–1416 (VALLIAMLFFIYAVIGMQMF). Topologically, residues 1417–1483 (GKVAMRDNNQ…GEEYTCGSNF (67 aa)) are extracellular. The dihydropyridine binding stretch occupies residues 1464–1530 (LCDPDSDYNP…LGPHHLDEFK (67 aa)). The segment at 1476-1519 (EYTCGSNFAIVYFISFYMLCAFLIINLFVAVIMDNFDYLTRDWS) is phenylalkylamine binding. The chain crosses the membrane as a helical span at residues 1484-1508 (AIVYFISFYMLCAFLIINLFVAVIM). The Cytoplasmic segment spans residues 1509 to 2203 (DNFDYLTRDW…ADEMICITTL (695 aa)). Disordered regions lie at residues 1734–1766 (NHVN…PASD), 1795–1816 (TSTN…KRPS), 1920–1963 (FERP…HRRS), and 2176–2195 (GPGY…DLAD). The span at 1795–1806 (TSTNANLNNANM) shows a compositional bias: polar residues. Residues 2180–2195 (SDEEPDPGREEEDLAD) show a composition bias toward acidic residues.

Belongs to the calcium channel alpha-1 subunit (TC 1.A.1.11) family. CACNA1D subfamily. In terms of assembly, voltage-dependent calcium channels are multisubunit complexes, consisting of alpha-1, alpha-2, beta and delta subunits in a 1:1:1:1 ratio. The channel activity is directed by the pore-forming and voltage-sensitive alpha-1 subunit. In many cases, this subunit is sufficient to generate voltage-sensitive calcium channel activity. The auxiliary subunits beta and alpha-2/delta linked by a disulfide bridge regulate the channel activity. Interacts with CABP1 and CABP4, resulting in a near elimination of calcium-dependent inactivation of the channel. Interacts with RIMBP2. In terms of tissue distribution, expressed in brain, pancreatic islets and B-lymphocytes.

It is found in the membrane. It carries out the reaction Ca(2+)(in) = Ca(2+)(out). Functionally, voltage-sensitive calcium channels (VSCC) mediate the entry of calcium ions into excitable cells and are also involved in a variety of calcium-dependent processes, including muscle contraction, hormone or neurotransmitter release, gene expression, cell motility, cell division and cell death. The isoform alpha-1D gives rise to L-type calcium currents. Long-lasting (L-type) calcium channels belong to the 'high-voltage activated' (HVA) group. They are blocked by dihydropyridines (DHP), phenylalkylamines, and by benzothiazepines. In terms of biological role, voltage-sensitive calcium channels (VSCC) mediate the entry of calcium ions into excitable cells and are also involved in a variety of calcium-dependent processes, including muscle contraction, hormone or neurotransmitter release, gene expression, cell motility, cell division and cell death. The isoform alpha-1D gives rise to L-type calcium currents. The protein is Voltage-dependent L-type calcium channel subunit alpha-1D (Cacna1d) of Rattus norvegicus (Rat).